Here is a 350-residue protein sequence, read N- to C-terminus: Major allergen Mal f 1 (350 aa).

The first 22 residues, 1-22, serve as a signal peptide directing secretion; sequence MRYSTVLAALALLGTSAVSVLA.

The protein resides in the secreted. It localises to the cell wall. This chain is Major allergen Mal f 1, found in Malassezia furfur (Pityriasis versicolor infection agent).